A 382-amino-acid chain; its full sequence is UDP-4-amino-4-deoxy-L-arabinose--oxoglutarate aminotransferase (382 aa).

At Lys-182 the chain carries N6-(pyridoxal phosphate)lysine.

It belongs to the DegT/DnrJ/EryC1 family. ArnB subfamily. Homodimer. It depends on pyridoxal 5'-phosphate as a cofactor.

It carries out the reaction UDP-4-amino-4-deoxy-beta-L-arabinose + 2-oxoglutarate = UDP-beta-L-threo-pentopyranos-4-ulose + L-glutamate. Its pathway is nucleotide-sugar biosynthesis; UDP-4-deoxy-4-formamido-beta-L-arabinose biosynthesis; UDP-4-deoxy-4-formamido-beta-L-arabinose from UDP-alpha-D-glucuronate: step 2/3. It functions in the pathway bacterial outer membrane biogenesis; lipopolysaccharide biosynthesis. Its function is as follows. Catalyzes the conversion of UDP-4-keto-arabinose (UDP-Ara4O) to UDP-4-amino-4-deoxy-L-arabinose (UDP-L-Ara4N). The modified arabinose is attached to lipid A and is required for resistance to polymyxin and cationic antimicrobial peptides. The sequence is that of UDP-4-amino-4-deoxy-L-arabinose--oxoglutarate aminotransferase from Pectobacterium carotovorum subsp. carotovorum (strain PC1).